Here is a 284-residue protein sequence, read N- to C-terminus: Ribosomal RNA small subunit methyltransferase A (284 aa).

Residues Asn-26, Leu-28, Gly-53, Glu-74, Asp-97, and Asn-127 each coordinate S-adenosyl-L-methionine.

The protein belongs to the class I-like SAM-binding methyltransferase superfamily. rRNA adenine N(6)-methyltransferase family. RsmA subfamily.

Its subcellular location is the cytoplasm. It carries out the reaction adenosine(1518)/adenosine(1519) in 16S rRNA + 4 S-adenosyl-L-methionine = N(6)-dimethyladenosine(1518)/N(6)-dimethyladenosine(1519) in 16S rRNA + 4 S-adenosyl-L-homocysteine + 4 H(+). Functionally, specifically dimethylates two adjacent adenosines (A1518 and A1519) in the loop of a conserved hairpin near the 3'-end of 16S rRNA in the 30S particle. May play a critical role in biogenesis of 30S subunits. The chain is Ribosomal RNA small subunit methyltransferase A from Anaeromyxobacter dehalogenans (strain 2CP-C).